Consider the following 908-residue polypeptide: Translation initiation factor IF-2 (908 aa).

The interval 145–312 is disordered; it reads EIPGLTQRAK…KGKKRQAEKI (168 aa). Residues 167–177 are compositionally biased toward basic and acidic residues; sequence VVERPEARPSA. Composition is skewed to low complexity over residues 194–217 and 263–276; these read RPEG…PRPG and VAGA…GAAV. The span at 278 to 296 shows a compositional bias: basic and acidic residues; it reads KRKEEFKKTELFEKHERVF. One can recognise a tr-type G domain in the interval 408–577; it reads KRPPVVTIMG…LLQADVLELK (170 aa). The tract at residues 417–424 is G1; it reads GHVDHGKT. 417-424 is a binding site for GTP; the sequence is GHVDHGKT. A G2 region spans residues 442 to 446; the sequence is GITQH. Residues 463–466 are G3; that stretch reads DTPG. Residues 463–467 and 517–520 contribute to the GTP site; these read DTPGH and NKID. Residues 517–520 form a G4 region; that stretch reads NKID. The segment at 553-555 is G5; that stretch reads SAK.

Belongs to the TRAFAC class translation factor GTPase superfamily. Classic translation factor GTPase family. IF-2 subfamily.

It is found in the cytoplasm. In terms of biological role, one of the essential components for the initiation of protein synthesis. Protects formylmethionyl-tRNA from spontaneous hydrolysis and promotes its binding to the 30S ribosomal subunits. Also involved in the hydrolysis of GTP during the formation of the 70S ribosomal complex. The protein is Translation initiation factor IF-2 of Geotalea daltonii (strain DSM 22248 / JCM 15807 / FRC-32) (Geobacter daltonii).